The sequence spans 212 residues: Pyrrolidone-carboxylate peptidase (212 aa).

Residues E78, C141, and H165 contribute to the active site.

It belongs to the peptidase C15 family. In terms of assembly, homotetramer.

It localises to the cytoplasm. It catalyses the reaction Release of an N-terminal pyroglutamyl group from a polypeptide, the second amino acid generally not being Pro.. Functionally, removes 5-oxoproline from various penultimate amino acid residues except L-proline. The polypeptide is Pyrrolidone-carboxylate peptidase (pcp) (Staphylococcus aureus).